Reading from the N-terminus, the 331-residue chain is tRNA uridine(34) hydroxylase (331 aa).

The Rhodanese domain maps to 123 to 217 (TDPEVLLIDT…YLEDVPQEES (95 aa)). Residue Cys177 is the Cysteine persulfide intermediate of the active site. The tract at residues 293–331 (KSRGEEHIGSEAAKAIKKRQAEKKLKRKNYHQHLTQGAE) is disordered. Positions 307 to 323 (AIKKRQAEKKLKRKNYH) are enriched in basic residues.

It belongs to the TrhO family.

It catalyses the reaction uridine(34) in tRNA + AH2 + O2 = 5-hydroxyuridine(34) in tRNA + A + H2O. In terms of biological role, catalyzes oxygen-dependent 5-hydroxyuridine (ho5U) modification at position 34 in tRNAs. In Hahella chejuensis (strain KCTC 2396), this protein is tRNA uridine(34) hydroxylase.